Reading from the N-terminus, the 485-residue chain is FAD-dependent monooxygenase elcH (485 aa).

Positions 1–19 (MFTLRSLAILAVFAATALA) are cleaved as a signal peptide. Residues D59 and G73 each contribute to the FAD site. Residues N126, N147, and N157 are each glycosylated (N-linked (GlcNAc...) asparagine).

It belongs to the paxM FAD-dependent monooxygenase family. FAD serves as cofactor.

Its pathway is secondary metabolite biosynthesis. Its function is as follows. FAD-dependent monooxygenase; part of the gene cluster that mediates the biosynthesis of elsinochrome C, a perelyenequinone phytotoxin structurally similar to cercosporin. The first step of elsinochrome C biosynthesis is performed by the polyketide synthase elcA which catalyzes the formation of nor-toralactone. The starter unit acyltransferase (SAT) domain of elcA initiates polyketide extension by the selective utilization of acetyl-CoA, which is elongated to the heptaketide in the beta-ketoacyl synthase (KS) domain by successive condensations with six malonyl units introduced by the malonyl acyltransferase (MAT) domain. The product template (PT) domain catalyzes C4-C9 and C2-C11 aldol cyclizations and dehydrations to a trihydroxynaphthalene, which is thought to be delivered to the thioesterase (TE) domain for product release. The bifunctional enzyme elcB then methylates nor-toralactone to toralactone before conducting an unusual oxidative aromatic ring opening. The next step in perylenequinone biosynthesis is an O-methylation at the nascent OH-6 of the elcB product performed by the O-methyltransferase elcD. The oxidative coupling of the two monomeric naphthol units in perylenequinone biosynthesis is catalyzed by the FAD-dependent monooxygenase elcE and the multicopper oxidase elcG. ElcG might catalyze the first intermolecular coupling in a regio- and stereo-selective manner via a phenol radical coupling mechanism and the elcE could forge the second C-C bond intramolecularly via a hydride transfer mechanism. The fasciclin domain-containing protein elcF might also play a role duting this step. The last piece of the puzzle in the biosynthesis of elsinochrome C is the additional annulation by enolate coupling to afford the dihydrobenzo(ghi)perylenequinone system, catalyzed by the FAD-dependent monooxygenase elcH. This Phaeosphaeria nodorum (strain SN15 / ATCC MYA-4574 / FGSC 10173) (Glume blotch fungus) protein is FAD-dependent monooxygenase elcH.